The following is a 294-amino-acid chain: uncharacterized protein (294 aa).

Residues 259–294 (LNAPTPIPPPITSHAGQEEALKPQRASKGKKAKARK) are disordered. The span at 283–294 (RASKGKKAKARK) shows a compositional bias: basic residues.

This is an uncharacterized protein from Homo sapiens (Human).